The sequence spans 86 residues: Anti-adapter protein IraP (86 aa).

The stretch at 1-36 forms a coiled coil; sequence MKNLIAELLFKLAQKEEESKELCAQVEALEIIVTAM.

Belongs to the IraP family. As to quaternary structure, interacts with RssB.

It localises to the cytoplasm. Inhibits RpoS proteolysis by regulating RssB activity, thereby increasing the stability of the sigma stress factor RpoS especially during phosphate starvation, but also in stationary phase and during nitrogen starvation. Its effect on RpoS stability is due to its interaction with RssB, which probably blocks the interaction of RssB with RpoS, and the consequent delivery of the RssB-RpoS complex to the ClpXP protein degradation pathway. This chain is Anti-adapter protein IraP, found in Escherichia coli O127:H6 (strain E2348/69 / EPEC).